The chain runs to 317 residues: Probable deoxyhypusine synthase (317 aa).

Catalysis depends on K285, which acts as the Nucleophile.

This sequence belongs to the deoxyhypusine synthase family. Requires NAD(+) as cofactor.

The catalysed reaction is [eIF5A protein]-L-lysine + spermidine = [eIF5A protein]-deoxyhypusine + propane-1,3-diamine. Its pathway is protein modification; eIF5A hypusination. Its function is as follows. Catalyzes the NAD-dependent oxidative cleavage of spermidine and the subsequent transfer of the butylamine moiety of spermidine to the epsilon-amino group of a specific lysine residue of the eIF-5A precursor protein to form the intermediate deoxyhypusine residue. This chain is Probable deoxyhypusine synthase (dys), found in Methanosarcina thermophila.